Reading from the N-terminus, the 205-residue chain is MIGRLRGVLVEKQAPEILIDVNGVGYELQMPLTSFYELPEVNHETMVYTHFVVREDAQLLYGFITKQERALFRLLIKTNGVGPKLALTILSGMTAGEFVGCVERDDIVTLVKLPGVGKKTAERLLVEMRDKLKSLMEASAGSEREFVLQSNYSPAPTVNSAEEDAISALISLGYKPPQASKSVSAAYKEGMDSETLIKAALKSML.

Residues 1–64 form a domain I region; the sequence is MIGRLRGVLV…EDAQLLYGFI (64 aa). Positions 65–143 are domain II; it reads TKQERALFRL…SLMEASAGSE (79 aa). The interval 144–156 is flexible linker; it reads REFVLQSNYSPAP. The tract at residues 157-205 is domain III; it reads TVNSAEEDAISALISLGYKPPQASKSVSAAYKEGMDSETLIKAALKSML.

This sequence belongs to the RuvA family. As to quaternary structure, homotetramer. Forms an RuvA(8)-RuvB(12)-Holliday junction (HJ) complex. HJ DNA is sandwiched between 2 RuvA tetramers; dsDNA enters through RuvA and exits via RuvB. An RuvB hexamer assembles on each DNA strand where it exits the tetramer. Each RuvB hexamer is contacted by two RuvA subunits (via domain III) on 2 adjacent RuvB subunits; this complex drives branch migration. In the full resolvosome a probable DNA-RuvA(4)-RuvB(12)-RuvC(2) complex forms which resolves the HJ.

It is found in the cytoplasm. In terms of biological role, the RuvA-RuvB-RuvC complex processes Holliday junction (HJ) DNA during genetic recombination and DNA repair, while the RuvA-RuvB complex plays an important role in the rescue of blocked DNA replication forks via replication fork reversal (RFR). RuvA specifically binds to HJ cruciform DNA, conferring on it an open structure. The RuvB hexamer acts as an ATP-dependent pump, pulling dsDNA into and through the RuvAB complex. HJ branch migration allows RuvC to scan DNA until it finds its consensus sequence, where it cleaves and resolves the cruciform DNA. This is Holliday junction branch migration complex subunit RuvA from Shewanella baltica (strain OS223).